A 336-amino-acid polypeptide reads, in one-letter code: Ornithine carbamoyltransferase, catabolic (336 aa).

Residues 57–60 (STRT), Q84, R108, and 135–138 (HPTQ) contribute to the carbamoyl phosphate site. Residues N169, D233, and 237-238 (SM) contribute to the L-ornithine site. Residues 275-276 (CL) and R322 contribute to the carbamoyl phosphate site.

This sequence belongs to the aspartate/ornithine carbamoyltransferase superfamily. OTCase family.

The protein resides in the cytoplasm. It catalyses the reaction carbamoyl phosphate + L-ornithine = L-citrulline + phosphate + H(+). It participates in amino-acid degradation; L-arginine degradation via ADI pathway; carbamoyl phosphate from L-arginine: step 2/2. In terms of biological role, reversibly catalyzes the transfer of the carbamoyl group from carbamoyl phosphate (CP) to the N(epsilon) atom of ornithine (ORN) to produce L-citrulline. The polypeptide is Ornithine carbamoyltransferase, catabolic (Photobacterium profundum (strain SS9)).